Here is a 1032-residue protein sequence, read N- to C-terminus: Toll-like receptor 9 (1032 aa).

The N-terminal stretch at 1–25 (MVLRRRTLHPLSLLVQAAVLAETLA) is a signal peptide. The Extracellular portion of the chain corresponds to 26-818 (LGTLPAFLPC…LCLDEVLSWD (793 aa)). The cysteines at positions 35 and 45 are disulfide-linked. 47-51 (WLFLK) serves as a coordination point for DNA. LRR repeat units lie at residues 62–85 (CSNI…DFVH), 87–110 (SNLR…HFSC), 122–147 (MRTL…SLVN), 150–166 (LSHT…LAGL), 167–190 (YSLR…AVKV), 198–221 (LSNL…LPPS), 223–242 (EYLL…DLAN), 243–268 (LTSL…CIEC), 283–306 (LSHL…WFQG), 308–332 (VNLS…AFQN), 333–356 (LTRL…RLHL), 363–386 (LVSL…TLRW), 390–413 (LPKL…IFGT), 415–440 (RALR…TPEE), 471–495 (CKNF…MFVN), 497–520 (SRLQ…QFLP), 521–544 (LTNL…SFSE), 546–573 (PQLQ…SFVT), 575–599 (LSML…LNSN), 601–623 (VRFL…LYLH), 628–651 (LSGL…NLDN), 653–676 (PKSL…SLSF), 677–700 (LPNL…TLPN), 702–724 (TLLQ…FFAL), 725–748 (AVEL…WFGP), and 750–773 (VMNL…AFVD). The N-linked (GlcNAc...) asparagine glycan is linked to asparagine 64. DNA-binding positions include 72 to 77 (SNRIHH) and 95 to 109 (KWNC…LHFS). Cysteine 98 and cysteine 110 are disulfide-bonded. An N-linked (GlcNAc...) asparagine glycan is attached at asparagine 129. Tyrosine 132 contributes to the DNA binding site. The N-linked (GlcNAc...) asparagine glycan is linked to asparagine 147. An intrachain disulfide couples cysteine 178 to cysteine 184. 179-181 (YYK) lines the DNA pocket. Asparagine 200 carries an N-linked (GlcNAc...) asparagine glycan. A DNA-binding site is contributed by tyrosine 208. N-linked (GlcNAc...) asparagine glycans are attached at residues asparagine 210 and asparagine 242. Intrachain disulfides connect cysteine 255–cysteine 268 and cysteine 258–cysteine 265. Residues cysteine 258 and cysteine 265 are each lipidated (S-palmitoyl cysteine). N-linked (GlcNAc...) asparagine glycosylation is found at asparagine 300, asparagine 309, asparagine 332, and asparagine 340. Residues 430-462 (PSTLSEATPEEADDAEQEELLSADPHPAPLSTP) form a disordered region. The span at 437–450 (TPEEADDAEQEELL) shows a compositional bias: acidic residues. The cysteines at positions 471 and 501 are disulfide-linked. 2 N-linked (GlcNAc...) asparagine glycosylation sites follow: asparagine 495 and asparagine 514. An N-linked (GlcNAc...) asparagine glycan is attached at asparagine 568. Asparagine 670, asparagine 695, and asparagine 700 each carry an N-linked (GlcNAc...) asparagine glycan. 2 N-linked (GlcNAc...) asparagine glycosylation sites follow: asparagine 732 and asparagine 752. 2 disulfide bridges follow: cysteine 765–cysteine 791 and cysteine 767–cysteine 810. Residues 819-839 (CFGLSLLAVAVGMVVPILHHL) form a helical membrane-spanning segment. At 840–1032 (CGWDVWYCFH…QNFCRGPTAE (193 aa)) the chain is on the cytoplasmic side. The 146-residue stretch at 868-1013 (LPYDAFVVFD…GFWAQLSTAL (146 aa)) folds into the TIR domain.

This sequence belongs to the Toll-like receptor family. As to quaternary structure, monomer and homodimer. Exists as a monomer in the absence of unmethylated cytidine-phosphate-guanosine (CpG) ligand. Proteolytic processing of an insertion loop (Z-loop) is required for homodimerization upon binding to the unmethylated CpG ligand leading to its activation. Interacts with MYD88 via their respective TIR domains. Interacts with BTK. Interacts (via transmembrane domain) with UNC93B1. Interacts with CD300LH; the interaction may promote full activation of TLR9-triggered innate responses. Interacts with CNPY3 and HSP90B1; this interaction is required for proper folding in the endoplasmic reticulum. Interacts with SMPDL3B. Interacts with CD82; this interaction is essential for TLR9-dependent myddosome formation in response to CpG stimulation. Post-translationally, activated by proteolytic cleavage of the flexible loop between repeats LRR14 and LRR15 within the ectodomain. Cleavage requires UNC93B1. Proteolytically processed by first removing the majority of the ectodomain by either asparagine endopeptidase (AEP) or a cathepsin followed by a trimming event that is solely cathepsin mediated and required for optimal receptor signaling. In terms of processing, palmitoylated by ZDHHC3 in the Golgi regulates TLR9 trafficking from the Golgi to endosomes. Depalmitoylation by PPT1 controls the release of TLR9 from UNC93B1 in endosomes. Expressed in the basolateral region of gastric epithelial cells with high levels detected in antrum and body mucosa (at protein level). Detected in spleen and stomach at higher levels in C57BL/6 mice than BALB/C.

It localises to the endoplasmic reticulum membrane. The protein localises to the endosome. Its subcellular location is the lysosome. The protein resides in the cytoplasmic vesicle. It is found in the phagosome. Its function is as follows. Key component of innate and adaptive immunity. TLRs (Toll-like receptors) control host immune response against pathogens through recognition of molecular patterns specific to microorganisms. TLR9 is a nucleotide-sensing TLR which is activated by unmethylated cytidine-phosphate-guanosine (CpG) dinucleotides. Acts via MYD88 and TRAF6, leading to NF-kappa-B activation, cytokine secretion and the inflammatory response. Plays a role in defense against systemic mouse cytomegalovirus infection. Controls lymphocyte response to Helicobacter infection. Upon CpG stimulation, induces B-cell proliferation, activation, survival and antibody production. This is Toll-like receptor 9 (Tlr9) from Mus musculus (Mouse).